We begin with the raw amino-acid sequence, 107 residues long: Ferredoxin-6 (107 aa).

In terms of domain architecture, 2Fe-2S ferredoxin-type spans 2–106 (AKIIFIEHNG…GLVVHLPEKQ (105 aa)). Positions 40, 46, 49, and 87 each coordinate [2Fe-2S] cluster.

This sequence belongs to the adrenodoxin/putidaredoxin family. It depends on [2Fe-2S] cluster as a cofactor.

Ferredoxins are small electron carrier proteins that participate in various redox reactions. FdVI is an essential protein required for growth of R.capsulatus. May be involved in Fe-S cluster assembly. The chain is Ferredoxin-6 from Rhodobacter capsulatus (Rhodopseudomonas capsulata).